We begin with the raw amino-acid sequence, 166 residues long: FMN reductase (NADH) RutF (166 aa).

It belongs to the non-flavoprotein flavin reductase family. RutF subfamily.

It catalyses the reaction FMNH2 + NAD(+) = FMN + NADH + 2 H(+). In terms of biological role, catalyzes the reduction of FMN to FMNH2 which is used to reduce pyrimidine by RutA via the Rut pathway. In Cronobacter sakazakii (strain ATCC BAA-894) (Enterobacter sakazakii), this protein is FMN reductase (NADH) RutF.